Here is a 635-residue protein sequence, read N- to C-terminus: Factor of DNA methylation 2 (635 aa).

Residues 289-471 (LDEKKNLHQA…ESMNSVLMTK (183 aa)) adopt a coiled-coil conformation. Residues 350 to 365 (ELERQKLDEDKRKSDA) are compositionally biased toward basic and acidic residues. The tract at residues 350-376 (ELERQKLDEDKRKSDAMNKSLQLASRE) is disordered.

In terms of assembly, forms a complex with IDN2 and FMD1/INDL1. Highly expressed in flowers and at lower levels in roots, leaves and stems.

Its function is as follows. Forms a complex with IDN2 and FDM1/IDNL1 that is required for RNA-directed DNA methylation (RdDM) and that functions at a downstream step of the RdDM pathway. This Arabidopsis thaliana (Mouse-ear cress) protein is Factor of DNA methylation 2.